We begin with the raw amino-acid sequence, 103 residues long: Large ribosomal subunit protein bL21 (103 aa).

Belongs to the bacterial ribosomal protein bL21 family. As to quaternary structure, part of the 50S ribosomal subunit. Contacts protein L20.

Functionally, this protein binds to 23S rRNA in the presence of protein L20. The sequence is that of Large ribosomal subunit protein bL21 from Serratia proteamaculans (strain 568).